A 674-amino-acid chain; its full sequence is MFFKLFTIFFFFIILLSKPLNSSSQSLNFTYNSFHRPPTNISIQGIATVTSNGILKLTDKTVISTGHAFYTEPIRFKDSPNDTVSSFSTTFVIGIYSGIPTISGHGMAFFIAPNPVLSSAMASQYLGLFSSTNNGNDTNHILAVEFDTIMNPEFDDTNDNHVGININSLTSVKSSLVGYWDEINQFNNLTLISRKRMQVWVDYDDRTNQIDVTMAPFGEVKPRKALVSVVRDLSSVFLQDMYLGFSAATGYVLSEHFVFGWSFMVKGKTAPPLTLSKVPKFPRVGPTSLQRFYKNRMPLFSLLLIPVLFVVSLIFLVRFIVRRRRKFAEEFEDWETEFGKNRLRFKDLYYATKGFKDKDLLGSGGFGRVYRGVMPTTKKEIAVKRVSNESRQGLKEFVAEIVSIGRMSHRNLVPLLGYCRRRDELLLVYDYMPNGSLDKYLYDCPEVTLDWKQRFNVIIGVASGLFYLHEEWEQVVIHRDIKASNVLLDAEYNGRLGDFGLARLCDHGSDPQTTRVVGTWGYLAPDHVRTGRATTATDVFAFGVLLLEVACGRRPIEIEIESDESVLLVDSVFGFWIEGNILDATDPNLGSVYDQREVETVLKLGLLCSHSDPQVRPTMRQVLQYLRGDATLPDLSPLDFRGSGKMLGMNHRFSESCTFSSGSSIAYSIVSGGR.

The signal sequence occupies residues 1-22 (MFFKLFTIFFFFIILLSKPLNS). Residues asparagine 21, asparagine 28, asparagine 40, asparagine 81, asparagine 136, and asparagine 188 are each glycosylated (N-linked (GlcNAc...) asparagine). Residues 23–296 (SSQSLNFTYN…TSLQRFYKNR (274 aa)) are Extracellular-facing. Residues 26 to 263 (SLNFTYNSFH…SEHFVFGWSF (238 aa)) are legume-lectin like. Residues 297–317 (MPLFSLLLIPVLFVVSLIFLV) form a helical membrane-spanning segment. Over 318-674 (RFIVRRRRKF…IAYSIVSGGR (357 aa)) the chain is Cytoplasmic. One can recognise a Protein kinase domain in the interval 355-632 (FKDKDLLGSG…LQYLRGDATL (278 aa)). Residues 361–369 (LGSGGFGRV) and lysine 384 contribute to the ATP site. Aspartate 480 (proton acceptor) is an active-site residue.

It in the C-terminal section; belongs to the protein kinase superfamily. Ser/Thr protein kinase family. The protein in the N-terminal section; belongs to the leguminous lectin family.

It localises to the cell membrane. The catalysed reaction is L-seryl-[protein] + ATP = O-phospho-L-seryl-[protein] + ADP + H(+). It carries out the reaction L-threonyl-[protein] + ATP = O-phospho-L-threonyl-[protein] + ADP + H(+). In Arabidopsis thaliana (Mouse-ear cress), this protein is L-type lectin-domain containing receptor kinase IV.3 (LECRK43).